The chain runs to 118 residues: Small ribosomal subunit protein uS13 (118 aa).

A disordered region spans residues 92-118 (RRGLPVRGQRTKTNARTRKGPRKPIKK).

It belongs to the universal ribosomal protein uS13 family. Part of the 30S ribosomal subunit. Forms a loose heterodimer with protein S19. Forms two bridges to the 50S subunit in the 70S ribosome.

Functionally, located at the top of the head of the 30S subunit, it contacts several helices of the 16S rRNA. In the 70S ribosome it contacts the 23S rRNA (bridge B1a) and protein L5 of the 50S subunit (bridge B1b), connecting the 2 subunits; these bridges are implicated in subunit movement. Contacts the tRNAs in the A and P-sites. This Yersinia enterocolitica serotype O:8 / biotype 1B (strain NCTC 13174 / 8081) protein is Small ribosomal subunit protein uS13.